Here is a 344-residue protein sequence, read N- to C-terminus: Glycerol-3-phosphate dehydrogenase [NAD(P)+] (344 aa).

The NADPH site is built by Trp-18, His-38, and Lys-115. Sn-glycerol 3-phosphate-binding residues include Lys-115, Gly-144, and Thr-146. Ala-148 contributes to the NADPH binding site. Sn-glycerol 3-phosphate-binding residues include Lys-199, Asp-252, Ser-262, Arg-263, and Asn-264. The active-site Proton acceptor is Lys-199. Residue Arg-263 participates in NADPH binding. Residues Val-288 and Glu-290 each coordinate NADPH.

This sequence belongs to the NAD-dependent glycerol-3-phosphate dehydrogenase family.

The protein localises to the cytoplasm. The enzyme catalyses sn-glycerol 3-phosphate + NAD(+) = dihydroxyacetone phosphate + NADH + H(+). The catalysed reaction is sn-glycerol 3-phosphate + NADP(+) = dihydroxyacetone phosphate + NADPH + H(+). It participates in membrane lipid metabolism; glycerophospholipid metabolism. Catalyzes the reduction of the glycolytic intermediate dihydroxyacetone phosphate (DHAP) to sn-glycerol 3-phosphate (G3P), the key precursor for phospholipid synthesis. This Hydrogenovibrio crunogenus (strain DSM 25203 / XCL-2) (Thiomicrospira crunogena) protein is Glycerol-3-phosphate dehydrogenase [NAD(P)+].